The primary structure comprises 75 residues: F1845 fimbrial adhesin operon regulatory protein DaaF (75 aa).

In terms of biological role, may have a possible regulatory function on the expression of the other daa genes. This Escherichia coli protein is F1845 fimbrial adhesin operon regulatory protein DaaF (daaF).